The chain runs to 121 residues: Acidic phospholipase A2 SpII RP4 (121 aa).

7 disulfides stabilise this stretch: Cys-25–Cys-114, Cys-27–Cys-43, Cys-42–Cys-94, Cys-48–Cys-121, Cys-49–Cys-87, Cys-56–Cys-80, and Cys-74–Cys-85. Residues Tyr-26, Gly-28, and Gly-30 each contribute to the Ca(2+) site. Residue His-46 is part of the active site. A Ca(2+)-binding site is contributed by Asp-47. Asp-88 is an active-site residue.

It depends on Ca(2+) as a cofactor. Expressed by the venom gland.

Its subcellular location is the secreted. It catalyses the reaction a 1,2-diacyl-sn-glycero-3-phosphocholine + H2O = a 1-acyl-sn-glycero-3-phosphocholine + a fatty acid + H(+). Snake venom phospholipase A2 (PLA2) which exhibits indirect hemolysis, induces mild edema inflammation in the foot pads of mice and slightly delays anticoagulant activities. In mice, not lethal, even at the highest dose, and exhibits low to moderate myotoxicity on muscular fibers. PLA2 catalyzes the calcium-dependent hydrolysis of the 2-acyl groups in 3-sn-phosphoglycerides. The protein is Acidic phospholipase A2 SpII RP4 of Bothrops alternatus (Urutu).